Consider the following 113-residue polypeptide: Large ribosomal subunit protein uL22 (113 aa).

It belongs to the universal ribosomal protein uL22 family. As to quaternary structure, part of the 50S ribosomal subunit.

In terms of biological role, this protein binds specifically to 23S rRNA; its binding is stimulated by other ribosomal proteins, e.g. L4, L17, and L20. It is important during the early stages of 50S assembly. It makes multiple contacts with different domains of the 23S rRNA in the assembled 50S subunit and ribosome. Functionally, the globular domain of the protein is located near the polypeptide exit tunnel on the outside of the subunit, while an extended beta-hairpin is found that lines the wall of the exit tunnel in the center of the 70S ribosome. The polypeptide is Large ribosomal subunit protein uL22 (Neorickettsia sennetsu (strain ATCC VR-367 / Miyayama) (Ehrlichia sennetsu)).